The primary structure comprises 82 residues: Mu-conotoxin MrVIA (82 aa).

Residues 1–22 (MKLTCMMIVAVLFLTAWTLVMA) form the signal peptide. Positions 23–49 (DDSNNGLANHFSKSRDEMEDPEASKLE) are excised as a propeptide. 3 disulfides stabilise this stretch: cysteine 53–cysteine 71, cysteine 60–cysteine 76, and cysteine 70–cysteine 81.

In terms of tissue distribution, expressed by the venom duct.

It localises to the secreted. In terms of biological role, muO-conotoxins are gating-modifier toxins that inhibit sodium current by trapping the domain II voltage sensor in the closed position to prevent opening of the sodium channel. This toxin inhibits rNav1.2/SCN2A (IC(50)=532 nM), rNav1.4/SCN4A (IC(50)=438 nM) and rNav1.7/SCN9A (IC(50)=345 nM). It blocks Nav channels by interacting mainly with the C-terminal part of the pore loop of domain-3. It does not bind on site 1. At small concentration, this toxin also acts as a calcium current agonist, whereas at higher doses it blocks fast-inactivating calcium current. In Conus marmoreus (Marble cone), this protein is Mu-conotoxin MrVIA.